Reading from the N-terminus, the 729-residue chain is Fatty acid oxidation complex subunit alpha (729 aa).

Residues 1 to 189 are enoyl-CoA hydratase/isomerase; sequence MLYKGDTLYL…KIGLVDGVVK (189 aa). Position 296 (D296) interacts with substrate. The 3-hydroxyacyl-CoA dehydrogenase stretch occupies residues 311 to 729; it reads ETPKQAAVLG…ARPVGDLKTA (419 aa). NAD(+)-binding positions include M324, D343, 400–402, K407, and S429; that span reads VVE. Catalysis depends on H450, which acts as the For 3-hydroxyacyl-CoA dehydrogenase activity. N453 is an NAD(+) binding site. N500 and Y660 together coordinate substrate. Residues 708–729 form a disordered region; that stretch reads RHNEPYYPPVEPARPVGDLKTA.

In the N-terminal section; belongs to the enoyl-CoA hydratase/isomerase family. This sequence in the C-terminal section; belongs to the 3-hydroxyacyl-CoA dehydrogenase family. Heterotetramer of two alpha chains (FadB) and two beta chains (FadA).

It carries out the reaction a (3S)-3-hydroxyacyl-CoA + NAD(+) = a 3-oxoacyl-CoA + NADH + H(+). It catalyses the reaction a (3S)-3-hydroxyacyl-CoA = a (2E)-enoyl-CoA + H2O. The catalysed reaction is a 4-saturated-(3S)-3-hydroxyacyl-CoA = a (3E)-enoyl-CoA + H2O. The enzyme catalyses (3S)-3-hydroxybutanoyl-CoA = (3R)-3-hydroxybutanoyl-CoA. It carries out the reaction a (3Z)-enoyl-CoA = a 4-saturated (2E)-enoyl-CoA. It catalyses the reaction a (3E)-enoyl-CoA = a 4-saturated (2E)-enoyl-CoA. The protein operates within lipid metabolism; fatty acid beta-oxidation. Involved in the aerobic and anaerobic degradation of long-chain fatty acids via beta-oxidation cycle. Catalyzes the formation of 3-oxoacyl-CoA from enoyl-CoA via L-3-hydroxyacyl-CoA. It can also use D-3-hydroxyacyl-CoA and cis-3-enoyl-CoA as substrate. The polypeptide is Fatty acid oxidation complex subunit alpha (Escherichia coli (strain SMS-3-5 / SECEC)).